Reading from the N-terminus, the 347-residue chain is Phosphoribosylformylglycinamidine cyclo-ligase (347 aa).

It belongs to the AIR synthase family.

Its subcellular location is the cytoplasm. The enzyme catalyses 2-formamido-N(1)-(5-O-phospho-beta-D-ribosyl)acetamidine + ATP = 5-amino-1-(5-phospho-beta-D-ribosyl)imidazole + ADP + phosphate + H(+). The protein operates within purine metabolism; IMP biosynthesis via de novo pathway; 5-amino-1-(5-phospho-D-ribosyl)imidazole from N(2)-formyl-N(1)-(5-phospho-D-ribosyl)glycinamide: step 2/2. In Prochlorococcus marinus (strain MIT 9312), this protein is Phosphoribosylformylglycinamidine cyclo-ligase.